The chain runs to 216 residues: Octanoyltransferase (216 aa).

Residues 35 to 213 (NSNPDFIWIG…IIQEEFNFDF (179 aa)) form the BPL/LPL catalytic domain. Substrate contacts are provided by residues 77–84 (RGGEVTCH), 144–146 (SIG), and 157–159 (GFS). Cys175 (acyl-thioester intermediate) is an active-site residue.

This sequence belongs to the LipB family.

The protein localises to the cytoplasm. The catalysed reaction is octanoyl-[ACP] + L-lysyl-[protein] = N(6)-octanoyl-L-lysyl-[protein] + holo-[ACP] + H(+). It participates in protein modification; protein lipoylation via endogenous pathway; protein N(6)-(lipoyl)lysine from octanoyl-[acyl-carrier-protein]: step 1/2. Functionally, catalyzes the transfer of endogenously produced octanoic acid from octanoyl-acyl-carrier-protein onto the lipoyl domains of lipoate-dependent enzymes. Lipoyl-ACP can also act as a substrate although octanoyl-ACP is likely to be the physiological substrate. The sequence is that of Octanoyltransferase from Prochlorococcus marinus (strain MIT 9312).